We begin with the raw amino-acid sequence, 549 residues long: Ceramide kinase 1 (549 aa).

The DAGKc domain occupies 162–316 (NRPKNIIIFI…VDVCTVHQHQ (155 aa)). Residues 172–174 (NPF) and 205–209 (TERAN) contribute to the ATP site. 233-236 (GGDG) is a binding site for substrate. The Proton donor/acceptor role is filled by D235. ATP is bound by residues E240, 277–279 (GSA), R342, R348, and 500–502 (DGE).

It catalyses the reaction an N-acylsphing-4-enine + ATP = an N-acylsphing-4-enine 1-phosphate + ADP + H(+). The enzyme catalyses an N-acyl-15-methylhexadecasphing-4-enine + ATP = an N-acyl-15-methylhexadecasphing-4-enine-1-phosphate + ADP + H(+). The protein operates within lipid metabolism; sphingolipid metabolism. Functionally, catalyzes the phosphorylation of ceramide to form ceramide 1-phosphate. C.elegans contain specific sphingoid bases, which are unique or different in structure compared to the sphingoid bases found in other animals. Two examples of these distinctive compounds are: 15-methylhexadecasphinganine and 15-methylhexadecasphing-4-enine. The sequence is that of Ceramide kinase 1 from Caenorhabditis elegans.